The primary structure comprises 170 residues: Phosphopantetheine adenylyltransferase (170 aa).

T10 contacts substrate. ATP contacts are provided by residues 10–11 and H18; that span reads TF. Residues K42, L75, and R89 each contribute to the substrate site. ATP is bound by residues 90 to 92, E100, and 125 to 131; these read GVR and YTYVASS.

It belongs to the bacterial CoaD family. Homohexamer. The cofactor is Mg(2+).

The protein resides in the cytoplasm. The enzyme catalyses (R)-4'-phosphopantetheine + ATP + H(+) = 3'-dephospho-CoA + diphosphate. The protein operates within cofactor biosynthesis; coenzyme A biosynthesis; CoA from (R)-pantothenate: step 4/5. Reversibly transfers an adenylyl group from ATP to 4'-phosphopantetheine, yielding dephospho-CoA (dPCoA) and pyrophosphate. This is Phosphopantetheine adenylyltransferase from Chlorobium limicola (strain DSM 245 / NBRC 103803 / 6330).